The sequence spans 308 residues: UPF0282 protein M1425_2116 (308 aa).

The protein belongs to the UPF0282 family.

In Saccharolobus islandicus (strain M.14.25 / Kamchatka #1) (Sulfolobus islandicus), this protein is UPF0282 protein M1425_2116.